A 121-amino-acid chain; its full sequence is Large ribosomal subunit protein bL19 (121 aa).

This sequence belongs to the bacterial ribosomal protein bL19 family.

In terms of biological role, this protein is located at the 30S-50S ribosomal subunit interface and may play a role in the structure and function of the aminoacyl-tRNA binding site. The chain is Large ribosomal subunit protein bL19 from Porphyromonas gingivalis (strain ATCC BAA-308 / W83).